The chain runs to 747 residues: Polyribonucleotide nucleotidyltransferase (747 aa).

2 residues coordinate Mg(2+): D487 and D493. Residues 554-613 (PSTTTIKIDKDKIRDVIGPGGKVIKEICETSDAKIDISDDGTVSVYASDRDKLKVALDKI) form the KH domain. Residues 623–691 (GEIFNGTVMK…NKGKAKLTIK (69 aa)) enclose the S1 motif domain. Positions 691-747 (KNADKDKSSNNPKQKNNVNNSKENSEPERRDSSKKRAWNEDNNSDTTEVITERKYFN) are disordered. A compositionally biased stretch (low complexity) spans 699–712 (SNNPKQKNNVNNSK). The span at 730-739 (EDNNSDTTEV) shows a compositional bias: polar residues.

Belongs to the polyribonucleotide nucleotidyltransferase family. Mg(2+) serves as cofactor.

It is found in the cytoplasm. It carries out the reaction RNA(n+1) + phosphate = RNA(n) + a ribonucleoside 5'-diphosphate. Functionally, involved in mRNA degradation. Catalyzes the phosphorolysis of single-stranded polyribonucleotides processively in the 3'- to 5'-direction. The chain is Polyribonucleotide nucleotidyltransferase from Rickettsia akari (strain Hartford).